The sequence spans 563 residues: MGNWLVNHWLSVLFLVSWLGLNIFLFVYVFLNYEKSDKYYYTREILGTALALARASALCLNFNSMVILIPVCRNLLSFLRGTCSFCNHTLRKPLDHNLTFHKLVAYMICIFTAIHIIAHLFNFERYSRSQQAMDGSLASVLSSLFHPEKEDSWLNPIQSPNVTVMYAAFTSIAGLTGVVATVALVLMVTSAMEFIRRNYFELFWYTHHLFIIYIICLGIHGLGGIVRGQTEESMSESHPRNCSYSFHEWDKYERSCRSPHFVGQPPESWKWILAPIAFYIFERILRFYRSRQKVVITKVVMHPCKVLELQMRKRGFTMGIGQYIFVNCPSISFLEWHPFTLTSAPEEEFFSIHIRAAGDWTENLIRTFEQQHSPMPRIEVDGPFGTVSEDVFQYEVAVLVGAGIGVTPFASFLKSIWYKFQRAHNKLKTQKIYFYWICRETGAFAWFNNLLNSLEQEMDELGKPDFLNYRLFLTGWDSNIAGHAALNFDRATDVLTGLKQKTSFGRPMWDNEFSRIATAHPKSVVGVFLCGPPTLAKSLRKCCRRYSSLDPRKVQFYFNKETF.

Residues M1–H8 are Cytoplasmic-facing. Residues W9–L31 traverse the membrane as a helical segment. At N32–E44 the chain is on the extracellular side. The chain crosses the membrane as a helical span at residues I45–I69. The Ferric oxidoreductase domain occupies R54–E282. At P70 to K102 the chain is on the cytoplasmic side. The heme site is built by H101 and H115. The helical transmembrane segment at L103–F123 threads the bilayer. Residues E124–A167 lie on the Extracellular side of the membrane. N-linked (GlcNAc...) asparagine glycosylation is present at N161. A helical membrane pass occupies residues A168 to V188. Residues T189–T206 are Cytoplasmic-facing. The helical transmembrane segment at H207–R227 threads the bilayer. Residues H208 and H220 each contribute to the heme site. Residues G228–E395 lie on the Extracellular side of the membrane. N-linked (GlcNAc...) asparagine glycosylation is present at N241. The FAD-binding FR-type domain occupies R283–D390. H337 to S343 contacts FAD. Residues V396 to I416 traverse the membrane as a helical segment. The tract at residues V396–L535 is interaction with NOXO1. Residues W417–F563 lie on the Cytoplasmic side of the membrane. At T429 the chain carries Phosphothreonine; by PKC/PRKCB.

In terms of assembly, NOX1, NOXA1, NOXO1, RAC1 and CYBA forms a functional multimeric complex supporting ROS production. Interacts with NOXO1. Interacts (via FAD-binding FR-type domain) with ARHGEF7 (via PH domain). The phosphorylated form at Thr-429 interacts with NOXA1 with greater affinity. FAD is required as a cofactor. Phosphorylation at Thr-429 mediated by PKC/PRKBC positively regulates its interaction with NOXA1 and enzyme activity. Expressed in vascular smooth muscle cells.

The protein resides in the cell projection. The protein localises to the invadopodium membrane. Its subcellular location is the cell membrane. The enzyme catalyses NADPH + 2 O2 = 2 superoxide + NADP(+) + H(+). Its activity is regulated as follows. The oxidase activity is potentiated by NOXA1 and NOXO1. In terms of biological role, NADPH oxidase that catalyzes the generation of superoxide from molecular oxygen utilizing NADPH as an electron donor. The protein is NADPH oxidase 1 (Nox1) of Rattus norvegicus (Rat).